A 622-amino-acid chain; its full sequence is Low affinity potassium transport system protein Kup (622 aa).

12 helical membrane passes run 9-29, 49-69, 103-123, 137-157, 165-185, 213-233, 247-267, 276-296, 337-357, 363-383, 396-416, and 419-439; these read LPAI…TSPL, VFGF…IKYL, VIMG…TPAI, PQLD…LFMI, VGKL…GLGL, VSFI…ALYA, WFTV…ALLL, PFFL…AALA, IYIP…IVSF, LAAA…ILST, FVAL…TANL, and LLSG…VMTT.

The protein belongs to the HAK/KUP transporter (TC 2.A.72) family.

It localises to the cell inner membrane. It catalyses the reaction K(+)(in) + H(+)(in) = K(+)(out) + H(+)(out). Responsible for the low-affinity transport of potassium into the cell. Likely operates as a K(+):H(+) symporter. The sequence is that of Low affinity potassium transport system protein Kup from Escherichia coli O157:H7.